The following is a 468-amino-acid chain: Gasdermin-C (468 aa).

Positions 1 to 230 (MSYTFDWLSK…CVILTSANTK (230 aa)) are triggers pyroptosis.

This sequence belongs to the gasdermin family. In terms of assembly, homooligomer; homooligomeric ring-shaped pore complex containing 27-28 subunits when inserted in the membrane. Post-translationally, cleavage by CASP8 relieves autoinhibition by releasing the N-terminal moiety (Gasdermin-C, N-terminal) that initiates pyroptosis. In terms of processing, palmitoylated.

Its subcellular location is the cytoplasm. It is found in the cytosol. The protein resides in the cell membrane. The full-length protein before cleavage is inactive: intramolecular interactions between N- and C-terminal domains mediate autoinhibition in the absence of activation signal. The intrinsic pyroptosis-inducing activity is carried by the released N-terminal moiety (Gasdermin-C, N-terminal) following cleavage by caspase CASP8. Functionally, this form constitutes the precursor of the pore-forming protein: upon cleavage, the released N-terminal moiety (Gasdermin-C, N-terminal) binds to membranes and forms pores, triggering pyroptosis. Its function is as follows. Pore-forming protein that causes membrane permeabilization and pyroptosis. Produced by the cleavage of gasdermin-C by caspase CASP8 in response to death signals. After cleavage, moves to the plasma membrane where it strongly binds to membrane inner leaflet lipids. Homooligomerizes within the membrane and forms pores of 10-15 nanometers (nm) of inner diameter, triggering pyroptosis. This Mus musculus (Mouse) protein is Gasdermin-C.